The following is a 379-amino-acid chain: Homoserine O-succinyltransferase (379 aa).

The region spanning 51–360 (NAVLICHALS…DSPYGHDAFL (310 aa)) is the AB hydrolase-1 domain. The active-site Nucleophile is the serine 157. Arginine 227 contacts substrate. Active-site residues include aspartate 323 and histidine 356. Aspartate 357 is a substrate binding site.

The protein belongs to the AB hydrolase superfamily. MetX family. Homodimer.

It is found in the cytoplasm. The enzyme catalyses L-homoserine + succinyl-CoA = O-succinyl-L-homoserine + CoA. It participates in amino-acid biosynthesis; L-methionine biosynthesis via de novo pathway; O-succinyl-L-homoserine from L-homoserine: step 1/1. Requires MetW for activity. Transfers a succinyl group from succinyl-CoA to L-homoserine, forming succinyl-L-homoserine. The protein is Homoserine O-succinyltransferase of Pseudomonas putida (strain ATCC 47054 / DSM 6125 / CFBP 8728 / NCIMB 11950 / KT2440).